A 106-amino-acid polypeptide reads, in one-letter code: Translation initiation factor 1A 2 (106 aa).

The segment at 1–24 (MRKRREGTANNSPTPEVTRVRTPR) is disordered. The region spanning 18–92 (TRVRTPRKEN…SKADVIWKYT (75 aa)) is the S1-like domain.

The protein belongs to the eIF-1A family.

Its function is as follows. Seems to be required for maximal rate of protein biosynthesis. Enhances ribosome dissociation into subunits and stabilizes the binding of the initiator Met-tRNA(I) to 40 S ribosomal subunits. The chain is Translation initiation factor 1A 2 (eIF1A2) from Methanosarcina mazei (strain ATCC BAA-159 / DSM 3647 / Goe1 / Go1 / JCM 11833 / OCM 88) (Methanosarcina frisia).